We begin with the raw amino-acid sequence, 203 residues long: Glycerol-3-phosphate acyltransferase (203 aa).

The next 5 helical transmembrane spans lie at 10–30 (LLAL…GLLI), 59–79 (PAAA…VILA), 87–107 (AAQI…YLKF), 116–136 (FFGT…AIWL), and 168–188 (LVVL…ENII).

The protein belongs to the PlsY family. In terms of assembly, probably interacts with PlsX.

The protein resides in the cell inner membrane. It carries out the reaction an acyl phosphate + sn-glycerol 3-phosphate = a 1-acyl-sn-glycero-3-phosphate + phosphate. It functions in the pathway lipid metabolism; phospholipid metabolism. Its function is as follows. Catalyzes the transfer of an acyl group from acyl-phosphate (acyl-PO(4)) to glycerol-3-phosphate (G3P) to form lysophosphatidic acid (LPA). This enzyme utilizes acyl-phosphate as fatty acyl donor, but not acyl-CoA or acyl-ACP. The sequence is that of Glycerol-3-phosphate acyltransferase from Dinoroseobacter shibae (strain DSM 16493 / NCIMB 14021 / DFL 12).